We begin with the raw amino-acid sequence, 247 residues long: 14-3-3 protein gamma (247 aa).

This sequence belongs to the 14-3-3 family. As to quaternary structure, homodimer, and heterodimer with other family members.

It localises to the cytoplasm. Adapter protein implicated in the regulation of a large spectrum of both general and specialized signaling pathways. Binds to a large number of partners, usually by recognition of a phosphoserine or phosphothreonine motif. Binding generally results in the modulation of the activity of the binding partner. The polypeptide is 14-3-3 protein gamma (YWHAG) (Gallus gallus (Chicken)).